The primary structure comprises 175 residues: Probable S-adenosyl-L-methionine-binding protein VirR (175 aa).

In terms of domain architecture, TsaA-like spans 35–165 (LFFVGKIRTP…DRSLSKPLAP (131 aa)). Residues 52-54 (PRQ), 90-91 (HE), Arg-114, Thr-124, and 145-148 (LDGT) contribute to the S-adenosyl-L-methionine site.

This sequence belongs to the tRNA methyltransferase O family.

The sequence is that of Probable S-adenosyl-L-methionine-binding protein VirR (virR) from Rhizobium radiobacter (Agrobacterium tumefaciens).